Here is a 2828-residue protein sequence, read N- to C-terminus: Matrix-remodeling-associated protein 5 (2828 aa).

An N-terminal signal peptide occupies residues 1–26; the sequence is MPKRAHWGALSVVLILLWGHPRVALA. An LRRNT domain is found at 27-55; it reads CPHPCACYVPSEVHCTFRSLASVPAGIAK. LRR repeat units follow at residues 56 to 77, 80 to 101, 104 to 125, 128 to 149, 152 to 173, and 184 to 205; these read HVERINLGFNSIQALSETSFAG, KLELLMIHGNEIPSIPDGALRD, SLQVFKFSYNKLRVITGQTLQG, NLMRLHIDHNKIEFIHPQAFNG, SLRLLHLEGNLLHQLHPSTFST, and TIRHLYLAENMVRTLPASMLRN. One can recognise an LRRCT domain in the interval 217–277; that stretch reads NPWTCDCEMR…HKLKDMTCLK (61 aa). Asn-287 and Asn-321 each carry an N-linked (GlcNAc...) asparagine glycan. Ig-like C2-type domains follow at residues 481–571 and 575–669; these read PSGA…YRVL and PSTQ…ITVT. 2 disulfide bridges follow: Cys-501–Cys-555 and Cys-599–Cys-651. A glycan (N-linked (GlcNAc...) asparagine) is linked at Asn-633. Disordered stretches follow at residues 671–715, 933–962, 1068–1190, 1204–1275, and 1367–1389; these read KGSG…RRLL, KPTHEETATEGWSAADVGSSPEPTSSEYEP, QGGN…APDI, AWVD…SSET, and EESSPVGFPGTPTWNPSRTAQPG. Over residues 695–708 the composition is skewed to acidic residues; the sequence is IVEDEGGSGMGDEE. O-linked (Xyl...) (chondroitin sulfate) serine glycosylation occurs at Ser-702. The segment covering 951–962 has biased composition (low complexity); that stretch reads SSPEPTSSEYEP. Residues 1090–1107 are compositionally biased toward polar residues; it reads SKSITLPDSTLGIMSSMS. The span at 1146-1168 shows a compositional bias: basic residues; that stretch reads PSRRRPNGRRRLRPNKFRHRHKQ. Polar residues-rich tracts occupy residues 1169–1190 and 1204–1214; these read TPPTTFAPSETFSTQPTQAPDI and AWVDNTVNTPK. Residues 1229 to 1243 show a composition bias toward basic residues; sequence TPRRKHGKRPNKHRY. Asn-1403 carries N-linked (GlcNAc...) asparagine glycosylation. The LRR 7 repeat unit spans residues 1410–1434; sequence LKELEDVDFTSEFLSSLTVSTPFHQ. 5 disordered regions span residues 1479–1499, 1536–1566, 1579–1603, 1669–1689, and 1700–1719; these read QNHTPTAARMKEPASSSPSTI, NPETEATPVNNEGTQHMSGPNELSTPSSDQD, QVFGSRSLPRGPDSQRQDGRVHASH, STTIPLPLHMSKPSIPSKFTD, and KVFGNNNIPEARNPVGKPPS. Polar residues predominate over residues 1542 to 1566; the sequence is TPVNNEGTQHMSGPNELSTPSSDQD. An N-linked (GlcNAc...) asparagine glycan is attached at Asn-1735. Ig-like C2-type domains are found at residues 1853–1946, 1950–2041, 2046–2140, 2146–2239, 2242–2343, 2345–2432, 2440–2534, 2542–2630, 2637–2722, and 2733–2828; these read PQIL…LSVT, PQIL…IRLH, PPVI…LNVQ, ARIT…VDVV, PAKI…KVVT, PATI…KTVW, PKIN…LQLT, PIFH…RLVS, PEAN…PSVT, and PRIT…IHVF. 2 cysteine pairs are disulfide-bonded: Cys-1875–Cys-1928 and Cys-1972–Cys-2025. Residues Asn-2007 and Asn-2056 are each glycosylated (N-linked (GlcNAc...) asparagine). Cystine bridges form between Cys-2069–Cys-2122, Cys-2168–Cys-2221, Cys-2265–Cys-2324, Cys-2368–Cys-2418, Cys-2466–Cys-2518, Cys-2564–Cys-2616, Cys-2659–Cys-2711, and Cys-2755–Cys-2810. An N-linked (GlcNAc...) asparagine glycan is attached at Asn-2693.

As to expression, detected in placenta (at protein level). Detected in cerebrospinal fluid and fibroblasts (at protein level). Highly expressed in kidney, also detected on liver and spleen. Expressed by proximal tubular cells of the kidney (at protein level). Expression highly increases during chronic kidney disease and autosomal dominant polycystic kidney disease, where is detected in cysts.

The protein localises to the secreted. Its function is as follows. In kidney, has anti-inflammatory and anti-fibrotic properties by limiting the induction of chemokines, fibronectin and collagen expression in response to TGB1 and pro-inflammatory stimuli. The polypeptide is Matrix-remodeling-associated protein 5 (MXRA5) (Homo sapiens (Human)).